Consider the following 137-residue polypeptide: Histone H2B (137 aa).

Positions 1–10 are enriched in basic and acidic residues; sequence MAPKAADKKP. A disordered region spans residues 1–45; sequence MAPKAADKKPASKAPATASKAPEKKDAGKKTAPSGDKKKRTKARK. An N6-acetyllysine; alternate mark is found at Lys-8 and Lys-9. Glycyl lysine isopeptide (Lys-Gly) (interchain with G-Cter in SUMO); alternate cross-links involve residues Lys-8 and Lys-9. At Ser-12 the chain carries Phosphoserine. N6-acetyllysine is present on Lys-13. Lys-24 carries the post-translational modification N6-acetyllysine; alternate. Residue Lys-24 forms a Glycyl lysine isopeptide (Lys-Gly) (interchain with G-Cter in SUMO); alternate linkage. Lys-25 participates in a covalent cross-link: Glycyl lysine isopeptide (Lys-Gly) (interchain with G-Cter in SUMO). Residue Lys-131 forms a Glycyl lysine isopeptide (Lys-Gly) (interchain with G-Cter in ubiquitin) linkage.

The protein belongs to the histone H2B family. In terms of assembly, the nucleosome is a histone octamer containing two molecules each of H2A, H2B, H3 and H4 assembled in one H3-H4 heterotetramer and two H2A-H2B heterodimers. The octamer wraps approximately 147 bp of DNA. Monoubiquitinated by the UBC2-BRE1 complex to form H2BK123ub1. H2BK123ub1 gives a specific tag for epigenetic transcriptional activation and is also prerequisite for H3K4me and H3K79me formation. H2BK123ub1 also modulates the formation of double-strand breaks during meiosis and is a prerequisite for DNA-damage checkpoint activation. Post-translationally, phosphorylated to form H2BS10ph during progression through meiotic prophase. May be correlated with chromosome condensation. In terms of processing, acetylated by GCN5 to form H2BK11ac and H2BK16ac. H2BK16ac can also be formed by ESA1. Acetylation of N-terminal lysines and particularly formation of H2BK11acK16ac has a positive effect on transcription. Sumoylation to form H2BK6su or H2BK7su, and probably also H2BK16su or H2BK17su, occurs preferentially near the telomeres and represses gene transcription.

It is found in the nucleus. The protein localises to the chromosome. Functionally, core component of nucleosome. Nucleosomes wrap and compact DNA into chromatin, limiting DNA accessibility to the cellular machineries which require DNA as a template. Histones thereby play a central role in transcription regulation, DNA repair, DNA replication and chromosomal stability. DNA accessibility is regulated via a complex set of post-translational modifications of histones, also called histone code, and nucleosome remodeling. The chain is Histone H2B (HTB1) from Chaetomium globosum (strain ATCC 6205 / CBS 148.51 / DSM 1962 / NBRC 6347 / NRRL 1970) (Soil fungus).